The primary structure comprises 116 residues: Large ribosomal subunit protein bL20c (116 aa).

Belongs to the bacterial ribosomal protein bL20 family.

It is found in the plastid. The protein localises to the chloroplast. Functionally, binds directly to 23S ribosomal RNA and is necessary for the in vitro assembly process of the 50S ribosomal subunit. It is not involved in the protein synthesizing functions of that subunit. The polypeptide is Large ribosomal subunit protein bL20c (Oltmannsiellopsis viridis (Marine flagellate)).